A 438-amino-acid chain; its full sequence is Phosphoribosylamine--glycine ligase (438 aa).

An ATP-grasp domain is found at 108–316 (REFMERNNIP…LLEIAKGIVE (209 aa)). ATP is bound at residue 135–194 (IDEYGKPVVVKPLGLTGGKGVKVVGYQLKDNEEAKEYAEHIIRKDGKVLIEERTDGVEFT). Mg(2+)-binding residues include Q274, E286, and N288. Mn(2+)-binding residues include Q274, E286, and N288.

The protein belongs to the GARS family. Mg(2+) is required as a cofactor. The cofactor is Mn(2+).

The enzyme catalyses 5-phospho-beta-D-ribosylamine + glycine + ATP = N(1)-(5-phospho-beta-D-ribosyl)glycinamide + ADP + phosphate + H(+). Its pathway is purine metabolism; IMP biosynthesis via de novo pathway; N(1)-(5-phospho-D-ribosyl)glycinamide from 5-phospho-alpha-D-ribose 1-diphosphate: step 2/2. The chain is Phosphoribosylamine--glycine ligase from Pyrococcus horikoshii (strain ATCC 700860 / DSM 12428 / JCM 9974 / NBRC 100139 / OT-3).